Consider the following 507-residue polypeptide: ATP synthase subunit alpha, chloroplastic (507 aa).

Residue 170 to 177 (GDRQTGKT) coordinates ATP.

It belongs to the ATPase alpha/beta chains family. In terms of assembly, F-type ATPases have 2 components, CF(1) - the catalytic core - and CF(0) - the membrane proton channel. CF(1) has five subunits: alpha(3), beta(3), gamma(1), delta(1), epsilon(1). CF(0) has four main subunits: a, b, b' and c.

The protein localises to the plastid. The protein resides in the chloroplast thylakoid membrane. The enzyme catalyses ATP + H2O + 4 H(+)(in) = ADP + phosphate + 5 H(+)(out). Produces ATP from ADP in the presence of a proton gradient across the membrane. The alpha chain is a regulatory subunit. The chain is ATP synthase subunit alpha, chloroplastic from Anthoceros angustus (Hornwort).